The following is a 1418-amino-acid chain: Structural maintenance of chromosomes protein 4 (1418 aa).

The tract at residues 1–122 (MSDSPLSKRQ…SPGRSPTRRL (122 aa)) is disordered. N-acetylserine is present on Ser-2. Composition is skewed to polar residues over residues 34–43 (ENRVNLSENT) and 68–97 (SGEN…PKTS). Phosphothreonine is present on Thr-43. Residues 107 to 117 (SQSPPRSPGRS) are compositionally biased toward low complexity. Ser-113 is modified (phosphoserine). An ATP-binding site is contributed by 185–192 (GPNGSGKS). Residues 345–673 (GQIENLNEVC…SKAQNKSKVL (329 aa)) are a coiled coil. The region spanning 686–799 (NGFHGRLGDL…QNLKQANNVA (114 aa)) is the SMC hinge domain. Coiled-coil stretches lie at residues 849-1172 (EEVD…CDNY) and 1224-1263 (VLEE…KKKR).

Belongs to the SMC family. SMC4 subfamily. As to quaternary structure, forms a heterodimer with SMC2. Component of the condensin complex, which contains the SMC2 and SMC4 heterodimer, and three non SMC subunits that probably regulate the complex: BRN1, YCS4 and YCG1/YCS5.

It is found in the nucleus. The protein resides in the cytoplasm. Its subcellular location is the chromosome. Functionally, central component of the condensin complex, a complex required for conversion of interphase chromatin into mitotic-like condense chromosomes. The condensin complex probably introduces positive supercoils into relaxed DNA in the presence of type I topoisomerases and converts nicked DNA into positive knotted forms in the presence of type II topoisomerases. This Saccharomyces cerevisiae (strain ATCC 204508 / S288c) (Baker's yeast) protein is Structural maintenance of chromosomes protein 4 (SMC4).